The chain runs to 275 residues: 4-hydroxy-tetrahydrodipicolinate reductase (275 aa).

Residues 13 to 18 (GAAGKM) and 108 to 110 (GTT) contribute to the NAD(+) site. The active-site Proton donor/acceptor is His-164. His-165 is a (S)-2,3,4,5-tetrahydrodipicolinate binding site. Lys-168 (proton donor) is an active-site residue. Position 174–175 (174–175 (GT)) interacts with (S)-2,3,4,5-tetrahydrodipicolinate.

This sequence belongs to the DapB family.

It is found in the cytoplasm. The enzyme catalyses (S)-2,3,4,5-tetrahydrodipicolinate + NAD(+) + H2O = (2S,4S)-4-hydroxy-2,3,4,5-tetrahydrodipicolinate + NADH + H(+). The catalysed reaction is (S)-2,3,4,5-tetrahydrodipicolinate + NADP(+) + H2O = (2S,4S)-4-hydroxy-2,3,4,5-tetrahydrodipicolinate + NADPH + H(+). It functions in the pathway amino-acid biosynthesis; L-lysine biosynthesis via DAP pathway; (S)-tetrahydrodipicolinate from L-aspartate: step 4/4. Functionally, catalyzes the conversion of 4-hydroxy-tetrahydrodipicolinate (HTPA) to tetrahydrodipicolinate. The chain is 4-hydroxy-tetrahydrodipicolinate reductase from Rippkaea orientalis (strain PCC 8801 / RF-1) (Cyanothece sp. (strain PCC 8801)).